The chain runs to 266 residues: Tryptophan synthase alpha chain (266 aa).

Catalysis depends on proton acceptor residues E49 and D60.

It belongs to the TrpA family. In terms of assembly, tetramer of two alpha and two beta chains.

The enzyme catalyses (1S,2R)-1-C-(indol-3-yl)glycerol 3-phosphate + L-serine = D-glyceraldehyde 3-phosphate + L-tryptophan + H2O. Its pathway is amino-acid biosynthesis; L-tryptophan biosynthesis; L-tryptophan from chorismate: step 5/5. Functionally, the alpha subunit is responsible for the aldol cleavage of indoleglycerol phosphate to indole and glyceraldehyde 3-phosphate. This chain is Tryptophan synthase alpha chain, found in Chloroflexus aurantiacus (strain ATCC 29364 / DSM 637 / Y-400-fl).